A 457-amino-acid polypeptide reads, in one-letter code: MQKYIKEARSLLALGIPVIIAQFSQTAMGVVDTVMAGAVNATEMSAVAVGTSIWLPTILLGQGILMALTPIVAQLNGSGQRKHIANRTQQGFWLATFLSIMVIAILYNSRFIIEAQHDIEPELAEKAIGFIHAIMWGAPGCLYYQVLRSQCEGLSKTKPGMIIGFIGLLINIPVNYAFIYGKFGAPQLGGIGCGVATASVFWAMFLMMRYYVRRAPTQRDVMPKKRLVLPEFHTIKRITLLGLPVGLALFFEVTLFAVVALLVSPLGVTAVASHQIALNFSSLMFMFPLSLGIAATIRVGYNLGQRSTEQARTSAITALAVGLMLASCTAIFSIIFREKIALMYNDNIEVVTLASHLMLFAALYQLSDSVQVIGSGVLRGYKDTRSIFFITFIAYWVIGLPSGYLLGRTDYIVEAMGPAGFWIGFILGLTASAIMMGTRIWWIQRQSDEVVLLRSER.

Helical transmembrane passes span 11-31, 53-73, 93-113, 127-147, 160-180, 188-208, 243-263, 276-296, 316-336, 357-377, 387-407, and 416-436; these read LLALGIPVIIAQFSQTAMGVV, IWLPTILLGQGILMALTPIVA, WLATFLSIMVIAILYNSRFII, AIGFIHAIMWGAPGCLYYQVL, GMIIGFIGLLINIPVNYAFIY, LGGIGCGVATASVFWAMFLMM, LPVGLALFFEVTLFAVVALLV, IALNFSSLMFMFPLSLGIAAT, ITALAVGLMLASCTAIFSIIF, LMLFAALYQLSDSVQVIGSGV, IFFITFIAYWVIGLPSGYLLG, and MGPAGFWIGFILGLTASAIMM.

The protein belongs to the multi antimicrobial extrusion (MATE) (TC 2.A.66.1) family. MdtK subfamily.

The protein localises to the cell inner membrane. Functionally, multidrug efflux pump that functions probably as a Na(+)/drug antiporter. In Proteus mirabilis (strain HI4320), this protein is Multidrug resistance protein MdtK.